The primary structure comprises 226 residues: High affinity heme transporter (226 aa).

Residues 1–20 (MISLKIYFVLIFLFLKGINS) form the signal peptide. Residues 72–101 (CDTTILSETNNVTGSCYVANCANDTVLEIC) form a heme binding region. S199 carries the GPI-anchor amidated serine lipid modification. The propeptide at 200–226 (SASSTIFKPSYFISCLLSVGLYLVLNF) is removed in mature form.

The protein localises to the cell membrane. It is found in the vacuole membrane. In terms of biological role, high affinity heme transporter involved in the assimilation of exogenous heme during conditions of low cellular iron. The chain is High affinity heme transporter from Schizosaccharomyces pombe (strain 972 / ATCC 24843) (Fission yeast).